We begin with the raw amino-acid sequence, 214 residues long: Metalloproteinase inhibitor 3 (214 aa).

The N-terminal stretch at 1–26 (MVFSTTAALSLLLALSSMQLSEVSEA) is a signal peptide. Cys-27 lines the Zn(2+) pocket. Involved in metalloproteinase-binding regions lie at residues 27–30 (CTCM) and 91–92 (ES). 6 disulfides stabilise this stretch: Cys-27–Cys-94, Cys-29–Cys-121, Cys-39–Cys-146, Cys-148–Cys-195, Cys-153–Cys-158, and Cys-166–Cys-187. Positions 27–146 (CTCMPNHPQE…GLNHRYQYGC (120 aa)) constitute an NTR domain. N-linked (GlcNAc...) asparagine glycosylation is present at Asn-210.

The protein belongs to the protease inhibitor I35 (TIMP) family. Expressed abundantly in brain and cartilage.

Its subcellular location is the secreted. It is found in the extracellular space. It localises to the extracellular matrix. In terms of biological role, complexes with metalloproteinases (such as collagenases) and irreversibly inactivates them by binding to their catalytic zinc cofactor. May form part of a tissue-specific acute response to remodeling stimuli. The sequence is that of Metalloproteinase inhibitor 3 (TIMP3) from Scyliorhinus torazame (Cloudy catshark).